Here is a 332-residue protein sequence, read N- to C-terminus: 2,3-diketo-L-gulonate reductase (332 aa).

Histidine 44 functions as the Proton donor in the catalytic mechanism. Residues 168-174 (ITMVDMS), 224-225 (WK), and 304-306 (GHE) each bind NAD(+).

It belongs to the LDH2/MDH2 oxidoreductase family. DlgD subfamily. Homodimer.

Its subcellular location is the cytoplasm. It carries out the reaction 3-dehydro-L-gulonate + NAD(+) = 2,3-dioxo-L-gulonate + NADH + H(+). It catalyses the reaction 3-dehydro-L-gulonate + NADP(+) = 2,3-dioxo-L-gulonate + NADPH + H(+). Functionally, catalyzes the reduction of 2,3-diketo-L-gulonate in the presence of NADH, to form 3-keto-L-gulonate. In Escherichia coli O17:K52:H18 (strain UMN026 / ExPEC), this protein is 2,3-diketo-L-gulonate reductase.